The sequence spans 748 residues: Phytochrome-like protein Cph1 (748 aa).

Residues 19–86 (AIHTAHLIQP…IQSRLTAGQI (68 aa)) form the PAS domain. The interval 87–510 (SSLNPSKLWA…KKAIVNLILR (424 aa)) is chromophore binding domain. Positions 152–320 (NLRDFYDVIV…VVFSNISAQE (169 aa)) constitute a GAF domain. Position 259 (C259) interacts with a tetrapyrrole. The Histidine kinase domain occupies 535–748 (IASHDLQEPL…TFYFSIPIGN (214 aa)). H538 carries the post-translational modification Phosphohistidine; by autocatalysis.

This sequence in the N-terminal section; belongs to the phytochrome family. As to quaternary structure, homodimer. In terms of processing, contains one covalently linked tetrapyrrole chromophore.

The catalysed reaction is ATP + protein L-histidine = ADP + protein N-phospho-L-histidine.. Its function is as follows. Regulatory photoreceptor which exists in two forms that are reversibly interconvertible by light: the R form that absorbs maximally in the red region of the spectrum and the FR form that absorbs maximally in the far-red region. Also has a slight blue shift for the far-red maximum. Forms a two-component system with the Rrcp1 response regulator. This is Phytochrome-like protein Cph1 (cph1) from Synechocystis sp. (strain ATCC 27184 / PCC 6803 / Kazusa).